The following is a 387-amino-acid chain: ATP phosphoribosyltransferase regulatory subunit (387 aa).

Belongs to the class-II aminoacyl-tRNA synthetase family. HisZ subfamily. Heteromultimer composed of HisG and HisZ subunits.

Its subcellular location is the cytoplasm. It participates in amino-acid biosynthesis; L-histidine biosynthesis; L-histidine from 5-phospho-alpha-D-ribose 1-diphosphate: step 1/9. Its function is as follows. Required for the first step of histidine biosynthesis. May allow the feedback regulation of ATP phosphoribosyltransferase activity by histidine. The chain is ATP phosphoribosyltransferase regulatory subunit from Psychrobacter arcticus (strain DSM 17307 / VKM B-2377 / 273-4).